Reading from the N-terminus, the 184-residue chain is Ribosome maturation factor RimM (184 aa).

One can recognise a PRC barrel domain in the interval 101 to 174; that stretch reads PDEYYDHQLV…RVVIADRPGL (74 aa).

It belongs to the RimM family. Binds ribosomal protein uS19.

The protein resides in the cytoplasm. Functionally, an accessory protein needed during the final step in the assembly of 30S ribosomal subunit, possibly for assembly of the head region. Essential for efficient processing of 16S rRNA. May be needed both before and after RbfA during the maturation of 16S rRNA. It has affinity for free ribosomal 30S subunits but not for 70S ribosomes. This is Ribosome maturation factor RimM from Nocardioides sp. (strain ATCC BAA-499 / JS614).